The following is a 172-amino-acid chain: Oleosin 18 kDa (172 aa).

Ala2 bears the N-acetylalanine mark. Positions 2 to 38 (ADRDRAGQYYQQQRGQVGETVKGILPEKAPSASQALT) are polar. Residues 39 to 110 (VATLFPLGGL…GGLSSLTFLA (72 aa)) form a hydrophobic region. Helical transmembrane passes span 42–62 (LFPL…ASVV), 70–90 (VFLI…LAVA), and 91–111 (GFLT…FLAN). Residues 147–172 (HAIQGRADQAGTGAGAGGGAGTKTSS) form a disordered region. Residues 158-172 (TGAGAGGGAGTKTSS) are compositionally biased toward gly residues.

Belongs to the oleosin family.

The protein resides in the lipid droplet. It localises to the membrane. Its function is as follows. May have a structural role to stabilize the lipid body during desiccation of the seed by preventing coalescence of the oil. Probably interacts with both lipid and phospholipid moieties of lipid bodies. May also provide recognition signals for specific lipase anchorage in lipolysis during seedling growth. This Oryza sativa subsp. indica (Rice) protein is Oleosin 18 kDa (OLE18).